Here is a 168-residue protein sequence, read N- to C-terminus: S-ribosylhomocysteine lyase (168 aa).

Residues His54, His58, and Cys128 each contribute to the Fe cation site.

It belongs to the LuxS family. In terms of assembly, homodimer. The cofactor is Fe cation.

The catalysed reaction is S-(5-deoxy-D-ribos-5-yl)-L-homocysteine = (S)-4,5-dihydroxypentane-2,3-dione + L-homocysteine. Involved in the synthesis of autoinducer 2 (AI-2) which is secreted by bacteria and is used to communicate both the cell density and the metabolic potential of the environment. The regulation of gene expression in response to changes in cell density is called quorum sensing. Catalyzes the transformation of S-ribosylhomocysteine (RHC) to homocysteine (HC) and 4,5-dihydroxy-2,3-pentadione (DPD). In Neisseria meningitidis serogroup C / serotype 2a (strain ATCC 700532 / DSM 15464 / FAM18), this protein is S-ribosylhomocysteine lyase.